Consider the following 280-residue polypeptide: Putative ABC transporter ATP-binding protein MTH_133 (280 aa).

Residues 6–241 form the ABC transporter domain; that stretch reads IEAVDIRYTY…IDTIRGANLR (236 aa). 39–46 contributes to the ATP binding site; the sequence is GPNGAGKS.

The protein belongs to the ABC transporter superfamily.

Its subcellular location is the cell membrane. Probably part of an ABC transporter complex. Responsible for energy coupling to the transport system. This Methanothermobacter thermautotrophicus (strain ATCC 29096 / DSM 1053 / JCM 10044 / NBRC 100330 / Delta H) (Methanobacterium thermoautotrophicum) protein is Putative ABC transporter ATP-binding protein MTH_133.